Consider the following 125-residue polypeptide: Profilin-A (125 aa).

N-acetylserine is present on Ser-2.

The protein belongs to the profilin family. Occurs in many kinds of cells as a complex with monomeric actin in a 1:1 ratio.

It localises to the cytoplasm. Its subcellular location is the cytoskeleton. Its function is as follows. Binds to actin and affects the structure of the cytoskeleton. At high concentrations, profilin prevents the polymerization of actin, whereas it enhances it at low concentrations. By binding to PIP2, it inhibits the formation of IP3 and DG. In Physarum polycephalum (Slime mold), this protein is Profilin-A (PROA).